Consider the following 95-residue polypeptide: Protein TusB (95 aa).

It belongs to the DsrH/TusB family. Heterohexamer, formed by a dimer of trimers. The hexameric TusBCD complex contains 2 copies each of TusB, TusC and TusD. The TusBCD complex interacts with TusE.

It localises to the cytoplasm. Functionally, part of a sulfur-relay system required for 2-thiolation of 5-methylaminomethyl-2-thiouridine (mnm(5)s(2)U) at tRNA wobble positions. This chain is Protein TusB, found in Escherichia coli (strain ATCC 8739 / DSM 1576 / NBRC 3972 / NCIMB 8545 / WDCM 00012 / Crooks).